The chain runs to 1852 residues: Dihydropyridine-sensitive L-type skeletal muscle calcium channel subunit alpha-1 (1852 aa).

The Cytoplasmic segment spans residues 1-70; the sequence is MESGSGGGGG…KTCINIVEWK (70 aa). The I repeat unit spans residues 57 to 354; it reads NPFRKTCINI…LVLGALSGEF (298 aa). A helical membrane pass occupies residues 71-86; sequence PFEIIILLTIFANCVA. The Extracellular portion of the chain corresponds to 87-107; it reads LAVFLPMPEEDTNNTNLTLES. 2 N-linked (GlcNAc...) asparagine glycosylation sites follow: Asn-99 and Asn-102. A helical transmembrane segment spans residues 108–127; the sequence is LEYIFLVIFTLECFLKIVAY. The Cytoplasmic portion of the chain corresponds to 128-139; sequence GLLFHEGAYLRN. A helical transmembrane segment spans residues 140-155; sequence CWNILDFVIVFMGLFT. Over 156–176 the chain is Extracellular; it reads LVVDTINTIAGVPTEKGGGFD. The helical transmembrane segment at 177 to 195 threads the bilayer; the sequence is MKALRAFRVLRPLRLVSGV. The Cytoplasmic portion of the chain corresponds to 196 to 214; sequence PSLQVVMSSILKSMLPLFH. A helical transmembrane segment spans residues 215–234; it reads IALLVFFMVHIYAIMGLELF. At 235-326 the chain is on the extracellular side; that stretch reads KCKMHKTCYY…WINDAMGNDW (92 aa). Residue Asn-274 is glycosylated (N-linked (GlcNAc...) asparagine). Residues 327–351 traverse the membrane as a helical segment; sequence PWIYFLTLILVGSFFILNLVLGALS. At 352-447 the chain is on the cytoplasmic side; the sequence is GEFTKEREES…RKCHVWVKSK (96 aa). The segment at 374–391 is binding to the beta subunit; that stretch reads QQMDEDLEGYMEWITHAE. The II repeat unit spans residues 433–679; the sequence is NVVLRRKCHV…VFLAIAVDNL (247 aa). The chain crosses the membrane as a helical span at residues 448–466; that stretch reads FFNWWVLLVVLLNTLVIAM. The Extracellular portion of the chain corresponds to 467–481; the sequence is EHHNQTEGLTSFQDT. A glycan (N-linked (GlcNAc...) asparagine) is linked at Asn-470. The helical transmembrane segment at 482–501 threads the bilayer; it reads ANVILLACFTIEMVMKMYAF. The Cytoplasmic portion of the chain corresponds to 502–509; it reads GPRAYFMS. A helical transmembrane segment spans residues 510-528; sequence IFNRFDCFVVTIGILEIIL. The Extracellular segment spans residues 529–538; that stretch reads VVSNIMTPLG. Residues 539–557 form a helical membrane-spanning segment; that stretch reads ISVMRCIRLLRLFKLTRYW. Residues 558-576 are Cytoplasmic-facing; sequence TSLNNLVASLLNSVKSIAS. The helical transmembrane segment at 577–596 threads the bilayer; the sequence is LLLLLFLFIVIFALLGMQVF. Topologically, residues 597–651 are extracellular; it reads GGKFNFPDRVIQRSNFDNFPQALISVFQVLTGEEWDSIMYNGIMAHGGPQSPGIL. The helical transmembrane segment at 652–675 threads the bilayer; it reads VSIYFIILYVCGNFVLLNVFLAIA. Topologically, residues 676–815 are cytoplasmic; it reads VDNLAEAESL…KLCHRIVNHT (140 aa). An III repeat occupies 802-1084; that stretch reads HKFRKLCHRI…IFVGFVIVTF (283 aa). The helical transmembrane segment at 816 to 834 threads the bilayer; the sequence is TFTNIILLFILLSSISLAA. At 835–850 the chain is on the extracellular side; sequence EDPIDPRSFRNKVLAY. The chain crosses the membrane as a helical span at residues 851 to 870; it reads ADIVFTTVFTIEIVLKMTVY. The Cytoplasmic portion of the chain corresponds to 871–882; the sequence is GAFLHTGSFCRN. Residues 883–901 form a helical membrane-spanning segment; that stretch reads SFNILDLIVVGVSLLSMGM. The Extracellular portion of the chain corresponds to 902-908; sequence ESSTISV. Residues 909 to 927 form a helical membrane-spanning segment; it reads VKILRVLRVLRPLRAINRA. Residues 928 to 946 are Cytoplasmic-facing; that stretch reads KGLKHVVQCMFVAIKTIGN. A helical membrane pass occupies residues 947–966; sequence IVLVTMLLDFMFACIGVQLF. The Extracellular segment spans residues 967 to 1056; that stretch reads KGKLYYCTDP…TGPLYNNRVG (90 aa). A dihydropyridine binding region spans residues 1004 to 1093; the sequence is RMWVNSDFNF…FQKQGEQEYK (90 aa). A helical membrane pass occupies residues 1057-1081; it reads ISIFFIIYIIIIAFFMMNIFVGFVI. Over 1082-1134 the chain is Cytoplasmic; the sequence is VTFQKQGEQEYKDCELDKNQRQCVQYALKARPLKCYIPKNPHQYRVWYFVTSC. The stretch at 1121-1405 is one IV repeat; that stretch reads NPHQYRVWYF…LFVAIIMDNV (285 aa). Residues 1135-1153 traverse the membrane as a helical segment; it reads YFEYLMFFLIMLNTLCLGI. Over 1154 to 1168 the chain is Extracellular; sequence QHCNQSDHITKLSDT. Asn-1157 is a glycosylation site (N-linked (GlcNAc...) asparagine). A helical transmembrane segment spans residues 1169-1188; that stretch reads LNLIFTVLFTGEMIVKLIAF. At 1189–1196 the chain is on the cytoplasmic side; the sequence is KAKGYFGD. A helical membrane pass occupies residues 1197–1215; sequence PWNVFDFIIVVGSIVDVVL. The Extracellular portion of the chain corresponds to 1216 to 1252; sequence SEVDAALEARGGLWCLHGCAEVNPMQAIAEAENVRVS. Residues 1253–1271 traverse the membrane as a helical segment; it reads ITFFRLFRVLRLIKLLNRS. At 1272 to 1290 the chain is on the cytoplasmic side; it reads EGIRNLLWTFIKSFQALPH. A helical transmembrane segment spans residues 1291 to 1310; it reads VGLLIVMLFFIYAVIGMQMF. Residues 1311-1377 are Extracellular-facing; that stretch reads GKVALVDGTE…GEEYTCGSSI (67 aa). A dihydropyridine binding region spans residues 1358-1424; it reads LCDAKSDYGP…LGPHHLDEFK (67 aa). The tract at residues 1370–1413 is phenylalkylamine binding; the sequence is EYTCGSSIAVFYFLSFYILCAFLIINLFVAIIMDNVDYLTRDWS. A helical membrane pass occupies residues 1378–1402; the sequence is AVFYFLSFYILCAFLIINLFVAIIM. Residues 1403-1852 are Cytoplasmic-facing; sequence DNVDYLTRDW…TKPKENTSAV (450 aa). In terms of domain architecture, EF-hand spans 1418–1453; sequence HHLDEFKKIWAEYDPEATGRIKHLDVVTLLRRIQPP. Positions 1431, 1433, 1435, 1437, and 1442 each coordinate Ca(2+). A disordered region spans residues 1820-1852; it reads NRQSGKVTKRKRRPIPVPPGTKSTKPKENTSAV.

The protein belongs to the calcium channel alpha-1 subunit (TC 1.A.1.11) family. In terms of assembly, multisubunit complex consisting of alpha-1, alpha-2, beta and delta subunits in a 1:1:1:1 ratio. The channel activity is directed by the pore-forming and voltage-sensitive alpha-1 subunit. In many cases, this subunit is sufficient to generate voltage-sensitive calcium channel activity. The auxiliary subunits beta and alpha-2/delta linked by a disulfide bridge regulate the channel activity. An additional gamma subunit is present only in skeletal muscle L-type channel. In terms of processing, may be non-phosphorylated. In terms of tissue distribution, skeletal muscle.

The protein resides in the membrane. In terms of biological role, voltage-sensitive calcium channels (VSCC) mediate the entry of calcium ions into excitable cells and are also involved in a variety of calcium-dependent processes, including muscle contraction, gene expression, cell motility, cell division and cell death. The isoform alpha-1S gives rise to L-type calcium currents. Long-lasting (L-type) calcium channels belong to the 'high-voltage activated' (HVA) group. They are blocked by dihydropyridines (DHP), phenylalkylamines, and by benzothiazepines. Calcium channels containing the alpha-1S subunit play an important role in excitation-contraction coupling in skeletal muscle. This is Dihydropyridine-sensitive L-type skeletal muscle calcium channel subunit alpha-1 from Cyprinus carpio (Common carp).